Reading from the N-terminus, the 859-residue chain is MSQASAQHTPMMAQYLKIKREHPEVLLFYRMGDFYELFYDDAKRAASLLDITLTQRGQSAGQPIPMAGVPYHSAESYLARLVKSGESVAICEQIGDPATAKGPVERKVVRIVTPGTLHDEALLDARRDNLVLAVHPQGDRWGLAWLELSSGHFSVLEVDGESDLLSEIQRLDPAELLAAESLSLPPALAERPGFRRQSDWLFDLESATRLLCDQFGVADLRGFGCAHLTTALTAAGVLIDYARDTQRSRLPHVTGIAVETRDEAVVIDAASRRNLEIDTNLGGGFDNTLASVLDTTATAMGSRQLKRWLNRPLRDIAQIQSRQAAVQCLIDADRHATLRDALKAIGDIERILARVALYSARPRDLARLRDALNALPALEHDLAELDEGTAIDALKHHIRPYPELAETLSRALVDNPPVVIRDGGVIGTGFDAELDEYRGLAEHAGDYLVELETRERERTGLVGLKVGYNRVHGYYIEIPRAQAREAPAEYIRRQTLKNAERFIIPELKEFEDKALSAKSRALAREKLLYDGLLETLNVDLQALQGTARALATLDVLACFAERALALDFVRPRLSDQPGLRIRGGRHPVVEHVSDHPFVPNDLMLDETRRLLVITGPNMGGKSTYMRQAALIALLAHTGSCVPADEAEIGPVDRIFTRIGSSDDLAGGRSTFMVEMTETATILHNATEHSLVLMDEIGRGTSTFDGLSLAWASAEHLVERRAFTLFATHYFEMTALTEPYDSVANVHLTAAEHRDGIVFMHRVEEGPASQSYGLQVAQLAGVPPRVVARAREKLATLEQQEVHQAGTRGGLGDSDAAAPQQADLFASAPHPVVEALEKLDLDAISPRQAMALLYEWREQC.

ATP is bound at residue 615-622; the sequence is GPNMGGKS.

The protein belongs to the DNA mismatch repair MutS family.

This protein is involved in the repair of mismatches in DNA. It is possible that it carries out the mismatch recognition step. This protein has a weak ATPase activity. The chain is DNA mismatch repair protein MutS from Chromohalobacter salexigens (strain ATCC BAA-138 / DSM 3043 / CIP 106854 / NCIMB 13768 / 1H11).